A 436-amino-acid chain; its full sequence is Arginine biosynthesis bifunctional protein ArgJ, mitochondrial (436 aa).

Positions 172, 198, 209, 298, 431, and 436 each coordinate substrate. Thr209 functions as the Nucleophile in the catalytic mechanism.

Belongs to the ArgJ family. Heterodimer of an alpha and a beta chain. The alpha and beta chains are autoproteolytically processed from a single precursor protein within the mitochondrion.

The protein resides in the mitochondrion matrix. It catalyses the reaction N(2)-acetyl-L-ornithine + L-glutamate = N-acetyl-L-glutamate + L-ornithine. It carries out the reaction L-glutamate + acetyl-CoA = N-acetyl-L-glutamate + CoA + H(+). It participates in amino-acid biosynthesis; L-arginine biosynthesis; L-ornithine and N-acetyl-L-glutamate from L-glutamate and N(2)-acetyl-L-ornithine (cyclic): step 1/1. Its pathway is amino-acid biosynthesis; L-arginine biosynthesis; N(2)-acetyl-L-ornithine from L-glutamate: step 1/4. Functionally, catalyzes two activities which are involved in the cyclic version of arginine biosynthesis: the synthesis of acetylglutamate from glutamate and acetyl-CoA, and of ornithine by transacetylation between acetylornithine and glutamate. This chain is Arginine biosynthesis bifunctional protein ArgJ, mitochondrial, found in Meyerozyma guilliermondii (strain ATCC 6260 / CBS 566 / DSM 6381 / JCM 1539 / NBRC 10279 / NRRL Y-324) (Yeast).